The sequence spans 301 residues: MANLRDIRKKIGSVKNTQKITHAMKLVSTSKLRKAEEVARNSRAYALKLDAVFDDVLSKMKNQGIKDIQSKYFRELERLEIKKVDIIFITADKGLCGGFNANTIKKVLACTNEYQEKDIKVRLRGIGKKGNEYFSFNGIEVLDKINDLSSMPNYERAQEFMQKVVEDYLNGKTDKVVIIHNGFKNMIIQEIRVKTILPIGHHIIHQNSQPSEAQETITSEPSGSEDEILDSLAKKYVEYSLYYALIDSLAAEHSARMQAMDTATNNAKDLVKNLTISYNKARQEAITTELVEINAGVEALK.

It belongs to the ATPase gamma chain family. As to quaternary structure, F-type ATPases have 2 components, CF(1) - the catalytic core - and CF(0) - the membrane proton channel. CF(1) has five subunits: alpha(3), beta(3), gamma(1), delta(1), epsilon(1). CF(0) has three main subunits: a, b and c.

Its subcellular location is the cell inner membrane. In terms of biological role, produces ATP from ADP in the presence of a proton gradient across the membrane. The gamma chain is believed to be important in regulating ATPase activity and the flow of protons through the CF(0) complex. In Helicobacter acinonychis (strain Sheeba), this protein is ATP synthase gamma chain.